The chain runs to 143 residues: Large-conductance mechanosensitive channel (143 aa).

Helical transmembrane passes span 16–36 (VMDL…TNSL), 40–60 (IIMP…NMFI), and 87–107 (GSFI…FMMV).

The protein belongs to the MscL family. Homopentamer.

The protein resides in the cell inner membrane. Its function is as follows. Channel that opens in response to stretch forces in the membrane lipid bilayer. May participate in the regulation of osmotic pressure changes within the cell. This Psychrobacter sp. (strain PRwf-1) protein is Large-conductance mechanosensitive channel.